Consider the following 227-residue polypeptide: Urease accessory protein UreF (227 aa).

Belongs to the UreF family. UreD, UreF and UreG form a complex that acts as a GTP-hydrolysis-dependent molecular chaperone, activating the urease apoprotein by helping to assemble the nickel containing metallocenter of UreC. The UreE protein probably delivers the nickel.

Its subcellular location is the cytoplasm. Functionally, required for maturation of urease via the functional incorporation of the urease nickel metallocenter. In Actinobacillus pleuropneumoniae serotype 3 (strain JL03), this protein is Urease accessory protein UreF.